The following is a 257-amino-acid chain: Imidazole glycerol phosphate synthase subunit HisF (257 aa).

Residues D12 and D131 contribute to the active site.

The protein belongs to the HisA/HisF family. In terms of assembly, heterodimer of HisH and HisF.

The protein localises to the cytoplasm. It catalyses the reaction 5-[(5-phospho-1-deoxy-D-ribulos-1-ylimino)methylamino]-1-(5-phospho-beta-D-ribosyl)imidazole-4-carboxamide + L-glutamine = D-erythro-1-(imidazol-4-yl)glycerol 3-phosphate + 5-amino-1-(5-phospho-beta-D-ribosyl)imidazole-4-carboxamide + L-glutamate + H(+). It functions in the pathway amino-acid biosynthesis; L-histidine biosynthesis; L-histidine from 5-phospho-alpha-D-ribose 1-diphosphate: step 5/9. IGPS catalyzes the conversion of PRFAR and glutamine to IGP, AICAR and glutamate. The HisF subunit catalyzes the cyclization activity that produces IGP and AICAR from PRFAR using the ammonia provided by the HisH subunit. The chain is Imidazole glycerol phosphate synthase subunit HisF from Nocardia farcinica (strain IFM 10152).